The sequence spans 136 residues: ATP synthase epsilon chain (136 aa).

The disordered stretch occupies residues 95–115 (DFSEAQSRLEEANKGSDRREQ). Over residues 101–115 (SRLEEANKGSDRREQ) the composition is skewed to basic and acidic residues.

It belongs to the ATPase epsilon chain family. As to quaternary structure, F-type ATPases have 2 components, CF(1) - the catalytic core - and CF(0) - the membrane proton channel. CF(1) has five subunits: alpha(3), beta(3), gamma(1), delta(1), epsilon(1). CF(0) has three main subunits: a, b and c.

The protein localises to the cellular thylakoid membrane. Functionally, produces ATP from ADP in the presence of a proton gradient across the membrane. This Rippkaea orientalis (strain PCC 8801 / RF-1) (Cyanothece sp. (strain PCC 8801)) protein is ATP synthase epsilon chain.